The primary structure comprises 114 residues: Gas vesicle protein J (114 aa).

A disordered region spans residues 63 to 114 (PTGTDMERVEEAAGISPDESRSLDTRSESEQMDELPGEAGASVSNTAPQEEE). The segment covering 80–91 (DESRSLDTRSES) has biased composition (basic and acidic residues). The span at 104-114 (SVSNTAPQEEE) shows a compositional bias: polar residues.

Belongs to the gas vesicle GvpA family. As to quaternary structure, gvpF to GvpM interact with each other in vitro, and may form multi-subunit complex(es). Interacts with GvpA.

The protein localises to the gas vesicle. In terms of biological role, a minor component of the gas vesicle, proteins GvpF to GvpM might be involved in nucleating gas vesicle formation. Gas vesicles are hollow, gas filled proteinaceous nanostructures found in some microorganisms. They allow positioning of halobacteria at the optimal depth for growth in the poorly aerated, shallow brine pools of their habitat. Expression of a 9.5 kb mc-vac DNA fragment containing 2 divergently transcribed regions (gvpD-gvpE-gvpF-gvpG-gvpH-gvpI-gvpJ-gvpK-gvpL-gvpM and gvpA-gvpC-gvpN-gvpO) allows H.volcanii to produce gas vesicles. In Haloferax mediterranei (strain ATCC 33500 / DSM 1411 / JCM 8866 / NBRC 14739 / NCIMB 2177 / R-4) (Halobacterium mediterranei), this protein is Gas vesicle protein J.